A 364-amino-acid chain; its full sequence is MTTPPPRPAAPTTDPGDTPTWAMILGRLTTGQSLLPGQTAWAMDQIMTGVATPAQIAAFAVSMKMKRPTSAEVTELAEIMLKHALPVPTDTIGTHTVDIVGTGGDGANTVNLSTMASIVVAAAGVPVVKHGNRAASSLSGGADTLEALGLRIDLGPDDVARCVAEVGIGFAFAPQFHPSYRHAGAVRREIGVPTVFNLLGPLTNPAKPRAGLIGCAWGDLAEVMAGVFATRGSSALVVHGDDGLDELTTTTTSTIWRVQAGTVERLTFDPAAFGFARAHVSELTGGDAEANAASAREVLGGATGPVRDAVLLNAAGAMVAHAGLSSDAKWVPAWESGLARAKEAIDSGAAEQLLARWVRFTQEL.

5-phospho-alpha-D-ribose 1-diphosphate is bound by residues Gly-101, 104–105, Thr-109, 111–114, 129–137, and Gly-141; these read GD, NLST, and KHGNRAASS. Residue Gly-101 coordinates anthranilate. Mg(2+) is bound at residue Ser-113. Asn-132 contacts anthranilate. Arg-187 contributes to the anthranilate binding site. Positions 245 and 246 each coordinate Mg(2+).

It belongs to the anthranilate phosphoribosyltransferase family. In terms of assembly, homodimer. Requires Mg(2+) as cofactor.

The enzyme catalyses N-(5-phospho-beta-D-ribosyl)anthranilate + diphosphate = 5-phospho-alpha-D-ribose 1-diphosphate + anthranilate. Its pathway is amino-acid biosynthesis; L-tryptophan biosynthesis; L-tryptophan from chorismate: step 2/5. Catalyzes the transfer of the phosphoribosyl group of 5-phosphorylribose-1-pyrophosphate (PRPP) to anthranilate to yield N-(5'-phosphoribosyl)-anthranilate (PRA). This is Anthranilate phosphoribosyltransferase from Mycolicibacterium gilvum (strain PYR-GCK) (Mycobacterium gilvum (strain PYR-GCK)).